The sequence spans 317 residues: Probable porphobilinogen deaminase (317 aa).

Cysteine 234 is subject to S-(dipyrrolylmethanemethyl)cysteine.

This sequence belongs to the HMBS family. Requires dipyrromethane as cofactor.

It catalyses the reaction 4 porphobilinogen + H2O = hydroxymethylbilane + 4 NH4(+). Its pathway is porphyrin-containing compound metabolism; protoporphyrin-IX biosynthesis; coproporphyrinogen-III from 5-aminolevulinate: step 2/4. Tetrapolymerization of the monopyrrole PBG into the hydroxymethylbilane pre-uroporphyrinogen in several discrete steps. This chain is Probable porphobilinogen deaminase, found in Methanosarcina acetivorans (strain ATCC 35395 / DSM 2834 / JCM 12185 / C2A).